Reading from the N-terminus, the 242-residue chain is Biosynthetic peptidoglycan transglycosylase (242 aa).

Residues 19-39 (ILAALAVFWGGGIALFSVVPV) form a helical membrane-spanning segment.

The protein belongs to the glycosyltransferase 51 family.

It is found in the cell inner membrane. It carries out the reaction [GlcNAc-(1-&gt;4)-Mur2Ac(oyl-L-Ala-gamma-D-Glu-L-Lys-D-Ala-D-Ala)](n)-di-trans,octa-cis-undecaprenyl diphosphate + beta-D-GlcNAc-(1-&gt;4)-Mur2Ac(oyl-L-Ala-gamma-D-Glu-L-Lys-D-Ala-D-Ala)-di-trans,octa-cis-undecaprenyl diphosphate = [GlcNAc-(1-&gt;4)-Mur2Ac(oyl-L-Ala-gamma-D-Glu-L-Lys-D-Ala-D-Ala)](n+1)-di-trans,octa-cis-undecaprenyl diphosphate + di-trans,octa-cis-undecaprenyl diphosphate + H(+). The protein operates within cell wall biogenesis; peptidoglycan biosynthesis. Its function is as follows. Peptidoglycan polymerase that catalyzes glycan chain elongation from lipid-linked precursors. This Salmonella newport (strain SL254) protein is Biosynthetic peptidoglycan transglycosylase.